The chain runs to 424 residues: ATP-citrate synthase alpha chain protein 3 (424 aa).

Residues N343, T345, and R376 each coordinate citrate.

Belongs to the succinate/malate CoA ligase beta subunit family. As to quaternary structure, heterooctamer of 4 alpha and 4 beta chains.

Its subcellular location is the cytoplasm. The protein localises to the cytosol. It catalyses the reaction oxaloacetate + acetyl-CoA + ADP + phosphate = citrate + ATP + CoA. Its function is as follows. ATP citrate-lyase is the primary enzyme responsible for the synthesis of cytosolic acetyl-CoA, used for the elongation of fatty acids and biosynthesis of isoprenoids, flavonoids and malonated derivatives. May supply substrate to the cytosolic acetyl-CoA carboxylase, which generates the malonyl-CoA used for the synthesis of a multitude of compounds, including very long chain fatty acids and flavonoids. Required for normal growth and development and elongation of C18 fatty acids to C20 to C24 fatty acids in seeds. In contrast to all known animal ACL enzymes having a homomeric structure, plant ACLs are composed of alpha and beta chains. In Arabidopsis thaliana (Mouse-ear cress), this protein is ATP-citrate synthase alpha chain protein 3 (ACLA-3).